Here is a 931-residue protein sequence, read N- to C-terminus: Aftiphilin (931 aa).

Residues 1–49 (MEPDIIRMYSSSPPPLDNGAEDDEEDEFGEFGGFSEVSPSGVGFVDFDT) form a disordered region. Residues 19–29 (GAEDDEEDEFG) show a composition bias toward acidic residues. Residues 28-31 (FGEF) carry the WXXF motif 1 motif. Residues 33 to 45 (GFSEVSPSGVGFV) show a composition bias toward low complexity. At Ser-151 the chain carries Phosphoserine. Residues 371-381 (SVKTSDVNEIG) show a composition bias toward polar residues. The interval 371–454 (SVKTSDVNEI…PFVTSTQDSM (84 aa)) is disordered. A Phosphoserine modification is found at Ser-395. The WXXF motif 2 signature appears at 433 to 436 (FGDF). Residues 439 to 454 (ANGTTPPFVTSTQDSM) show a composition bias toward polar residues. The WXXF motif 3 motif lies at 476 to 479 (FGEF). Disordered regions lie at residues 494-561 (TESD…SSAG) and 599-636 (WQSQRTDETMGTLGTPKMHSVSSAASKGAVASGHLQEP). Residues 516-530 (GGKDSKPDSKLKNGQ) show a composition bias toward basic and acidic residues. A Phosphothreonine modification is found at Thr-613. Low complexity predominate over residues 618–631 (SVSSAASKGAVASG). Positions 712–714 (YQW) match the CLTCL1/Clathrin-binding motif. The clathrin-binding stretch occupies residues 821-825 (LLNLD).

In terms of assembly, self-associates. Interacts with GGA1 (via GAE domain). Interacts with GGA3 (via GAE domain), AP1G1 (via GAE domain) and AP1G2 (via GAE domain). Component of the aftiphilin/p200/gamma-synergin complex, at least composed of AFTPH/aftiphilin, HEATR5B/p200a and SYNRG/gamma-synergin, which plays a role in the AP1G1/AP-1-mediated protein trafficking from early to recycling endosomes. Within the complex interacts with HEATR5B/p200a and SYNRG/gamma-synergin; the interactions are direct. Interacts with AP1G1/AP-1; the interaction is required to recruit AFTPH/aftiphilin to the perinuclear region of the cell. Interacts with CLTCL1/Clathrin.

It localises to the cytoplasm. Its subcellular location is the perinuclear region. The protein localises to the cytoplasmic vesicle. The protein resides in the clathrin-coated vesicle. Its function is as follows. Component of clathrin-coated vesicles. Component of the aftiphilin/p200/gamma-synergin complex, which plays roles in AP1G1/AP-1-mediated protein trafficking including the trafficking of transferrin from early to recycling endosomes, and the membrane trafficking of furin and the lysosomal enzyme cathepsin D between the trans-Golgi network (TGN) and endosomes. The sequence is that of Aftiphilin (Aftph) from Mus musculus (Mouse).